The chain runs to 311 residues: GTPase Era (311 aa).

The Era-type G domain occupies 18-185 (RSGFVALIGA…AKYLAESVPN (168 aa)). The G1 stretch occupies residues 26–33 (GAPNAGKS). 26–33 (GAPNAGKS) contributes to the GTP binding site. A G2 region spans residues 52–56 (QTTRA). The G3 stretch occupies residues 73–76 (DTPG). GTP-binding positions include 73-77 (DTPGI) and 135-138 (NKVD). The interval 135-138 (NKVD) is G4. The G5 stretch occupies residues 164 to 166 (ISA). The region spanning 216-293 (LHEELPYAST…HQFLFVKVRE (78 aa)) is the KH type-2 domain.

It belongs to the TRAFAC class TrmE-Era-EngA-EngB-Septin-like GTPase superfamily. Era GTPase family. As to quaternary structure, monomer.

It is found in the cytoplasm. The protein localises to the cell inner membrane. In terms of biological role, an essential GTPase that binds both GDP and GTP, with rapid nucleotide exchange. Plays a role in 16S rRNA processing and 30S ribosomal subunit biogenesis and possibly also in cell cycle regulation and energy metabolism. The sequence is that of GTPase Era from Brucella melitensis biotype 1 (strain ATCC 23456 / CCUG 17765 / NCTC 10094 / 16M).